Reading from the N-terminus, the 219-residue chain is Protein-L-isoaspartate O-methyltransferase (219 aa).

Residue S64 is part of the active site.

The protein belongs to the methyltransferase superfamily. L-isoaspartyl/D-aspartyl protein methyltransferase family.

The protein resides in the cytoplasm. It carries out the reaction [protein]-L-isoaspartate + S-adenosyl-L-methionine = [protein]-L-isoaspartate alpha-methyl ester + S-adenosyl-L-homocysteine. In terms of biological role, catalyzes the methyl esterification of L-isoaspartyl residues in peptides and proteins that result from spontaneous decomposition of normal L-aspartyl and L-asparaginyl residues. It plays a role in the repair and/or degradation of damaged proteins. This chain is Protein-L-isoaspartate O-methyltransferase, found in Chlorobaculum parvum (strain DSM 263 / NCIMB 8327) (Chlorobium vibrioforme subsp. thiosulfatophilum).